The sequence spans 197 residues: Phosphoheptose isomerase (197 aa).

The 161-residue stretch at 37–197 (MLQCLMNDGK…CIDSVLLEGM (161 aa)) folds into the SIS domain. Substrate is bound at residue 52–54 (NGG). Zn(2+) is bound by residues histidine 61 and glutamate 65. Residues glutamate 65, 94–95 (ND), 120–122 (STS), serine 125, and glutamine 175 each bind substrate. Residues glutamine 175 and histidine 183 each coordinate Zn(2+).

This sequence belongs to the SIS family. GmhA subfamily. In terms of assembly, homotetramer. Zn(2+) serves as cofactor.

It is found in the cytoplasm. The enzyme catalyses 2 D-sedoheptulose 7-phosphate = D-glycero-alpha-D-manno-heptose 7-phosphate + D-glycero-beta-D-manno-heptose 7-phosphate. It functions in the pathway carbohydrate biosynthesis; D-glycero-D-manno-heptose 7-phosphate biosynthesis; D-glycero-alpha-D-manno-heptose 7-phosphate and D-glycero-beta-D-manno-heptose 7-phosphate from sedoheptulose 7-phosphate: step 1/1. The protein operates within bacterial outer membrane biogenesis; LOS core biosynthesis. Functionally, catalyzes the isomerization of sedoheptulose 7-phosphate in D-glycero-D-manno-heptose 7-phosphate. The sequence is that of Phosphoheptose isomerase from Neisseria meningitidis serogroup A / serotype 4A (strain DSM 15465 / Z2491).